A 118-amino-acid polypeptide reads, in one-letter code: MKLSENEASKLIEKLWFRHTDSTIIAVLQDYKTKEVLMVGHMNREAVFKTLTTGYVHFWSLSRKKLWLKGETSGHFQLVEDFKIDCDGDAMVFLVKSVGPVCHTGNRSCFYRNFSDLI.

A Mg(2+)-binding site is contributed by aspartate 85. Position 86 (cysteine 86) interacts with Zn(2+). Residues aspartate 87 and aspartate 89 each contribute to the Mg(2+) site. Cysteine 102 and cysteine 109 together coordinate Zn(2+).

This sequence belongs to the PRA-CH family. Homodimer. It depends on Mg(2+) as a cofactor. Zn(2+) is required as a cofactor.

The protein resides in the cytoplasm. It catalyses the reaction 1-(5-phospho-beta-D-ribosyl)-5'-AMP + H2O = 1-(5-phospho-beta-D-ribosyl)-5-[(5-phospho-beta-D-ribosylamino)methylideneamino]imidazole-4-carboxamide. It functions in the pathway amino-acid biosynthesis; L-histidine biosynthesis; L-histidine from 5-phospho-alpha-D-ribose 1-diphosphate: step 3/9. Functionally, catalyzes the hydrolysis of the adenine ring of phosphoribosyl-AMP. This Sulfurisphaera tokodaii (strain DSM 16993 / JCM 10545 / NBRC 100140 / 7) (Sulfolobus tokodaii) protein is Phosphoribosyl-AMP cyclohydrolase.